The sequence spans 98 residues: Large ribosomal subunit protein uL23 (98 aa).

This sequence belongs to the universal ribosomal protein uL23 family. As to quaternary structure, part of the 50S ribosomal subunit. Contacts protein L29, and trigger factor when it is bound to the ribosome.

One of the early assembly proteins it binds 23S rRNA. One of the proteins that surrounds the polypeptide exit tunnel on the outside of the ribosome. Forms the main docking site for trigger factor binding to the ribosome. This is Large ribosomal subunit protein uL23 from Methylorubrum populi (strain ATCC BAA-705 / NCIMB 13946 / BJ001) (Methylobacterium populi).